Reading from the N-terminus, the 503-residue chain is Maturase K (503 aa).

Belongs to the intron maturase 2 family. MatK subfamily.

The protein resides in the plastid. Its subcellular location is the chloroplast. Usually encoded in the trnK tRNA gene intron. Probably assists in splicing its own and other chloroplast group II introns. This is Maturase K from Purshia tridentata (Antelope bitterbrush).